A 353-amino-acid polypeptide reads, in one-letter code: ATP-dependent kinase YFH7 (353 aa).

ATP is bound at residue 31–39 (GSPGSGKST).

It belongs to the YFH7 family.

Its function is as follows. ATP-dependent kinase that could be involved in endoplasmic reticulum membrane assembly. The polypeptide is ATP-dependent kinase YFH7 (YFH7) (Saccharomyces cerevisiae (strain ATCC 204508 / S288c) (Baker's yeast)).